Reading from the N-terminus, the 62-residue chain is Conotoxin Mi5.2 (62 aa).

Residues 1 to 19 form the signal peptide; sequence MRCVPVFIILLLLIPSASS. A propeptide spanning residues 20–50 is cleaved from the precursor; the sequence is VDVQPLTRDDVPLASFLDDARRTLRSPWMTR.

It belongs to the conotoxin T superfamily. In terms of processing, contains 2 disulfide bonds that can be either 'C1-C3, C2-C4' or 'C1-C4, C2-C3', since these disulfide connectivities have been observed for conotoxins with cysteine framework V (for examples, see AC P0DQQ7 and AC P81755). In terms of tissue distribution, expressed by the venom duct.

The protein resides in the secreted. This Conus miles (Soldier cone) protein is Conotoxin Mi5.2.